Reading from the N-terminus, the 239-residue chain is Large ribosomal subunit protein uL1 (239 aa).

This sequence belongs to the universal ribosomal protein uL1 family. Part of the 50S ribosomal subunit.

Its function is as follows. Binds directly to 23S rRNA. The L1 stalk is quite mobile in the ribosome, and is involved in E site tRNA release. Protein L1 is also a translational repressor protein, it controls the translation of the L11 operon by binding to its mRNA. This is Large ribosomal subunit protein uL1 from Rickettsia rickettsii (strain Iowa).